The sequence spans 841 residues: Translation initiation factor IF-2 (841 aa).

The interval 94-255 (QRSPEEIEAE…RNAHGFQSPT (162 aa)) is disordered. The span at 96–135 (SPEEIEAERKREMDERRAVENAARQKAEEEAKRRAEEDAR) shows a compositional bias: basic and acidic residues. A compositionally biased stretch (low complexity) spans 136 to 175 (NQPAAGQPASAPAQPVAAAEPVREAPAAAAPAPASAAPSA). Basic and acidic residues-rich tracts occupy residues 176–217 (DARK…EKAP) and 225–234 (TTDEESDSFR). Basic residues predominate over residues 235–248 (RGGRGKGKLKKRNA). Residues 341-510 (SRAPVVTVMG…LLQAEVLELK (170 aa)) form the tr-type G domain. Positions 350–357 (GHVDHGKT) are G1. 350-357 (GHVDHGKT) contacts GTP. The tract at residues 375–379 (GITQH) is G2. The G3 stretch occupies residues 396–399 (DTPG). GTP is bound by residues 396 to 400 (DTPGH) and 450 to 453 (NKID). The segment at 450-453 (NKID) is G4. The segment at 486-488 (SAK) is G5.

Belongs to the TRAFAC class translation factor GTPase superfamily. Classic translation factor GTPase family. IF-2 subfamily.

It is found in the cytoplasm. Its function is as follows. One of the essential components for the initiation of protein synthesis. Protects formylmethionyl-tRNA from spontaneous hydrolysis and promotes its binding to the 30S ribosomal subunits. Also involved in the hydrolysis of GTP during the formation of the 70S ribosomal complex. This is Translation initiation factor IF-2 from Pseudomonas syringae pv. tomato (strain ATCC BAA-871 / DC3000).